A 236-amino-acid polypeptide reads, in one-letter code: MEYKRVLVKFSGEALSGNSGFGIDVKILEYIAGEIKSLVDNQIEVGIVIGGGNIIRGVSAAQGGIIRRTSGDYMGMLATVINAVAMQEALEYLGVDVRVQSALEIKEVCESYIYRRAIRHLEKGRVVVFGAGTGNPFFTTDSAATLRAVEIGADVIIKATKVDGVYDKDPHKFSDAKMLESISYDEALRDHIKVMDDTAIALAKDNKLPILVCNMFREGNLLDLLKYKKGICSIVK.

9–12 (KFSG) is an ATP binding site. An involved in allosteric activation by GTP region spans residues 17–22 (GNSGFG). Residue G51 participates in UMP binding. The ATP site is built by G52 and R56. Residues D72 and 133–140 (TGNPFFTT) contribute to the UMP site. ATP contacts are provided by T160, Y166, and D169.

This sequence belongs to the UMP kinase family. As to quaternary structure, homohexamer.

The protein resides in the cytoplasm. The enzyme catalyses UMP + ATP = UDP + ADP. Its pathway is pyrimidine metabolism; CTP biosynthesis via de novo pathway; UDP from UMP (UMPK route): step 1/1. With respect to regulation, allosterically activated by GTP. Inhibited by UTP. In terms of biological role, catalyzes the reversible phosphorylation of UMP to UDP. In Helicobacter hepaticus (strain ATCC 51449 / 3B1), this protein is Uridylate kinase.